A 244-amino-acid chain; its full sequence is Probable transcriptional regulatory protein TT_C0469 (244 aa).

This sequence belongs to the TACO1 family.

It localises to the cytoplasm. The sequence is that of Probable transcriptional regulatory protein TT_C0469 from Thermus thermophilus (strain ATCC BAA-163 / DSM 7039 / HB27).